The following is a 467-amino-acid chain: ATP synthase subunit beta (467 aa).

156 to 163 (GGAGVGKT) lines the ATP pocket.

The protein belongs to the ATPase alpha/beta chains family. In terms of assembly, F-type ATPases have 2 components, CF(1) - the catalytic core - and CF(0) - the membrane proton channel. CF(1) has five subunits: alpha(3), beta(3), gamma(1), delta(1), epsilon(1). CF(0) has three main subunits: a(1), b(2) and c(9-12). The alpha and beta chains form an alternating ring which encloses part of the gamma chain. CF(1) is attached to CF(0) by a central stalk formed by the gamma and epsilon chains, while a peripheral stalk is formed by the delta and b chains.

It is found in the cell inner membrane. The catalysed reaction is ATP + H2O + 4 H(+)(in) = ADP + phosphate + 5 H(+)(out). In terms of biological role, produces ATP from ADP in the presence of a proton gradient across the membrane. The catalytic sites are hosted primarily by the beta subunits. The sequence is that of ATP synthase subunit beta from Cupriavidus necator (strain ATCC 17699 / DSM 428 / KCTC 22496 / NCIMB 10442 / H16 / Stanier 337) (Ralstonia eutropha).